We begin with the raw amino-acid sequence, 156 residues long: Regulatory protein RecX (156 aa).

This sequence belongs to the RecX family.

It is found in the cytoplasm. Its function is as follows. Modulates RecA activity. This Pseudomonas putida (strain GB-1) protein is Regulatory protein RecX.